The chain runs to 379 residues: Cystathionine gamma-lyase (379 aa).

K195 carries the N6-(pyridoxal phosphate)lysine modification.

The protein belongs to the trans-sulfuration enzymes family. Pyridoxal 5'-phosphate serves as cofactor.

It catalyses the reaction L,L-cystathionine + H2O = 2-oxobutanoate + L-cysteine + NH4(+). It carries out the reaction L-homocysteine + H2O = 2-oxobutanoate + hydrogen sulfide + NH4(+) + H(+). Catalyzes the conversion of cystathionine to cysteine, and homocysteine to sulfide. The chain is Cystathionine gamma-lyase (mccB) from Bacillus subtilis (strain 168).